We begin with the raw amino-acid sequence, 464 residues long: 17,18-epoxy-17-hydroxycur-19-ene N-malonyltransferase (464 aa).

Residues His191 and Asp403 each act as proton acceptor in the active site.

This sequence belongs to the plant acyltransferase family. As to quaternary structure, monomer. In terms of tissue distribution, mainly expressed in roots.

The protein resides in the cytoplasm. It catalyses the reaction 17,18-epoxy-17-hydroxycur-19-ene + malonyl-CoA = prestrychnine + CoA. It functions in the pathway alkaloid biosynthesis. In terms of biological role, malonylransferase involved in the biosynthesis of curare monoterpene indole alkaloids (MIAs), natural products such as strychnine, a neurotoxic compound used as a pesticide to control rodents, and its pharmacologically active derivatives, including brucine, used to regulate blood pressure. Curare alkaloids act as animal glycine receptor antagonists. Catalyzes the conversion of 17,18-epoxy-17-hydroxycur-19-ene (Wieland-Gumlich aldehyde) to prestrychnine, which is spontaneously converted into strychnine and isostrychnine. This Strychnos nux-vomica (Poison nut) protein is 17,18-epoxy-17-hydroxycur-19-ene N-malonyltransferase.